The primary structure comprises 200 residues: Putative 3-methyladenine DNA glycosylase (200 aa).

The protein belongs to the DNA glycosylase MPG family.

The chain is Putative 3-methyladenine DNA glycosylase from Methanocella arvoryzae (strain DSM 22066 / NBRC 105507 / MRE50).